The primary structure comprises 366 residues: 8-hydroxyquercetin 8-O-methyltransferase (366 aa).

S-adenosyl-L-methionine-binding positions include 207-210 (VGGG), 231-232 (DL), 251-252 (DM), and lysine 265. The Proton acceptor role is filled by histidine 269.

Belongs to the class I-like SAM-binding methyltransferase superfamily. Cation-independent O-methyltransferase family. COMT subfamily. As to quaternary structure, homodimer.

The catalysed reaction is 3,3',4',5,7,8-hexahydroxyflavone + S-adenosyl-L-methionine = 3,3',4',5,7-pentahydroxy-8-methoxyflavone + S-adenosyl-L-homocysteine + H(+). The enzyme catalyses 4',7,8-trihydroxyflavone + S-adenosyl-L-methionine = 4',7-dihydroxy-8-methoxyflavone + S-adenosyl-L-homocysteine + H(+). It carries out the reaction 8-hydroxy-7-methoxyflavone + S-adenosyl-L-methionine = 7,8-dimethoxyflavone + S-adenosyl-L-homocysteine + H(+). Its pathway is flavonoid metabolism. Flavonoid 8-O-methyltransferase involved in the biosynthesis of polymethoxylated flavonoids natural products such as pebrellin, aroma compounds which contribute to the flavor of peppermint, and exhibit pharmacological activities such as anti-allergic, anti-oxidant, antibacterial, anti-proliferative, and anti-inflammatory effects. Catalyzes S-adenosylmethionine-dependent regioselective 8-O-methylation of flavonoids; active on various hydroxylated flavonoid substrates, including 7,8,3'4'-tetrahydroxy-flavone, 7,8,4'-trihydroxy-flavone and 8-hydroxy-flavone 7-methyl ether. This is 8-hydroxyquercetin 8-O-methyltransferase from Mentha piperita (Peppermint).